The following is a 121-amino-acid chain: Large ribosomal subunit protein bL20 (121 aa).

It belongs to the bacterial ribosomal protein bL20 family.

Functionally, binds directly to 23S ribosomal RNA and is necessary for the in vitro assembly process of the 50S ribosomal subunit. It is not involved in the protein synthesizing functions of that subunit. This is Large ribosomal subunit protein bL20 from Sphingopyxis alaskensis (strain DSM 13593 / LMG 18877 / RB2256) (Sphingomonas alaskensis).